Reading from the N-terminus, the 773-residue chain is Transducin-like enhancer protein 4 (773 aa).

Disordered stretches follow at residues 1 to 22 (MIRD…QPAQ), 140 to 162 (HGHG…AIPP), and 182 to 360 (LPIK…ASSL). A q domain region spans residues 1–136 (MIRDLSKMYP…AIIGQQLQAQ (136 aa)). Residues 137 to 204 (HLSHGHGLPV…HQRDRDSIKS (68 aa)) are GP domain. Positions 183 to 202 (PIKDEKKHHDNDHQRDRDSI) are enriched in basic and acidic residues. A compositionally biased stretch (low complexity) spans 203-212 (KSSSVSPSAS). Residues 205 to 274 (SSVSPSASFR…SPRGSPAHSP (70 aa)) form a ccN domain region. Residues S208, S212, and S222 each carry the phosphoserine modification. The segment covering 215-252 (GAEKHRNSADYSSESKKQKTEEKEIAARYDSDGEKSDD) has biased composition (basic and acidic residues). Position 237 is an N6-acetyllysine (K237). Phosphoserine occurs at positions 245, 250, 269, and 273. A compositionally biased stretch (basic and acidic residues) spans 273–289 (SPRENGLDKTRLLKKDA). Residues 275–452 (RENGLDKTRL…PGGKPAYSFH (178 aa)) form an SP domain region. An N6-acetyllysine modification is found at K281. Low complexity predominate over residues 290-305 (PISPASIASSSSTPSS). Position 292 is a phosphoserine (S292). Polar residues predominate over residues 317-328 (TTPVSKSNTPTP). Position 318 is a phosphothreonine (T318). 2 positions are modified to phosphoserine: S321 and S323. T325, T327, T334, and T340 each carry phosphothreonine. S419 carries the post-translational modification Phosphoserine. WD repeat units follow at residues 485–523 (NHGE…NKSP), 531–570 (NRDN…PRIK), 575–614 (SSAP…LVRQ), 617–656 (GHTD…QLQQ), 658–697 (DFTS…KYQL), 699–738 (LHES…SIFQ), and 740–773 (KESS…EVIY).

Belongs to the WD repeat Groucho/TLE family. Homooligomer and heterooligomer with other family members. Interacts with PAX5. Interacts with LEF1, TCF7, TCF7L1 and TCF7L2. Interacts with ZNF703; TLE4 may mediate ZNF703 transcriptional repression. Interacts with SIX3 and SIX6. Interacts with PAX2. Interacts with TLE1. Post-translationally, phosphorylated. PAX5 binding increases phosphorylation. Ubiquitinated by XIAP/BIRC4. In terms of tissue distribution, in all tissues examined, mostly in brain, and muscle.

Its subcellular location is the nucleus. Its function is as follows. Transcriptional corepressor that binds to a number of transcription factors. Inhibits the transcriptional activation mediated by PAX5, and by CTNNB1 and TCF family members in Wnt signaling. The effects of full-length TLE family members may be modulated by association with dominant-negative AES. Essential for the transcriptional repressor activity of SIX3 during retina and lens development and for SIX3 transcriptional auto-repression. Involved in transcriptional repression of GNRHR and enhances MSX1-mediated transcriptional repression of CGA/alpha-GSU. The chain is Transducin-like enhancer protein 4 (TLE4) from Homo sapiens (Human).